The following is a 580-amino-acid chain: Malto-oligosyltrehalose trehalohydrolase (580 aa).

The tract at residues 56–88 is disordered; that stretch reads LPDPRSARQPDGVHARSQRWEPPGQFGAARTDT. Residues 60–69 are compositionally biased toward basic and acidic residues; it reads RSARQPDGVH. Substrate is bound at residue 245-250; it reads RLDAVH. Asp-247 (nucleophile) is an active-site residue. Glu-284 serves as the catalytic Proton donor. Substrate-binding positions include 309–313 and 379–384; these read DDIHH and HDQVGN.

Belongs to the glycosyl hydrolase 13 family.

Its subcellular location is the cytoplasm. It carries out the reaction hydrolysis of (1-&gt;4)-alpha-D-glucosidic linkage in 4-alpha-D-[(1-&gt;4)-alpha-D-glucanosyl]n trehalose to yield trehalose and (1-&gt;4)-alpha-D-glucan.. Its pathway is glycan biosynthesis; trehalose biosynthesis. Is involved in the biosynthesis of trehalose but not in that of capsular glucan and glycogen. In Mycobacterium tuberculosis (strain CDC 1551 / Oshkosh), this protein is Malto-oligosyltrehalose trehalohydrolase (treZ).